The primary structure comprises 430 residues: Tol-Pal system protein TolB (430 aa).

The first 21 residues, 1–21, serve as a signal peptide directing secretion; sequence MKQAFRVALGFLVLWASVLHA.

It belongs to the TolB family. The Tol-Pal system is composed of five core proteins: the inner membrane proteins TolA, TolQ and TolR, the periplasmic protein TolB and the outer membrane protein Pal. They form a network linking the inner and outer membranes and the peptidoglycan layer.

It is found in the periplasm. Functionally, part of the Tol-Pal system, which plays a role in outer membrane invagination during cell division and is important for maintaining outer membrane integrity. TolB occupies a key intermediary position in the Tol-Pal system because it communicates directly with both membrane-embedded components, Pal in the outer membrane and TolA in the inner membrane. The polypeptide is Tol-Pal system protein TolB (Yersinia pestis).